The sequence spans 112 residues: Transmembrane protein 14C (112 aa).

4 helical membrane-spanning segments follow: residues 7–27 (VVPL…GGII), 32–52 (AGSV…GLGA), 62–82 (VWVF…RFYH), and 88–108 (PAGL…VSMF).

Belongs to the TMEM14 family.

It localises to the mitochondrion membrane. In terms of biological role, required for normal heme biosynthesis. The sequence is that of Transmembrane protein 14C (TMEM14C) from Homo sapiens (Human).